Here is a 119-residue protein sequence, read N- to C-terminus: Protein Wnt-4 (119 aa).

Ser1 carries O-palmitoleoyl serine; by PORCN lipidation. Cystine bridges form between Cys69-Cys100 and Cys85-Cys95. Asn86 carries N-linked (GlcNAc...) asparagine glycosylation.

This sequence belongs to the Wnt family. Palmitoleoylation is required for efficient binding to frizzled receptors. Depalmitoleoylation leads to Wnt signaling pathway inhibition.

It localises to the secreted. The protein localises to the extracellular space. Its subcellular location is the extracellular matrix. Its function is as follows. Ligand for members of the frizzled family of seven transmembrane receptors. Plays an important role in embryonic development. The protein is Protein Wnt-4 (WNT-4) of Eptatretus stoutii (Pacific hagfish).